The primary structure comprises 61 residues: Small ribosomal subunit protein uS14 (61 aa).

Residues Cys-24, Cys-27, Cys-40, and Cys-43 each contribute to the Zn(2+) site.

It belongs to the universal ribosomal protein uS14 family. Zinc-binding uS14 subfamily. In terms of assembly, part of the 30S ribosomal subunit. Contacts proteins S3 and S10. Requires Zn(2+) as cofactor.

In terms of biological role, binds 16S rRNA, required for the assembly of 30S particles and may also be responsible for determining the conformation of the 16S rRNA at the A site. The sequence is that of Small ribosomal subunit protein uS14 from Clostridium novyi (strain NT).